Reading from the N-terminus, the 407-residue chain is uncharacterized protein (407 aa).

Transmembrane regions (helical) follow at residues 13–30, 40–62, 67–89, 118–140, 147–169, 179–199, 253–271, 281–303, 334–356, 361–378, and 385–402; these read IVFTSFILYLLFFLSPFL, VTPLASIIGSGYLVSAPLLYYVL, ILGMAGIVILAYLIGGAIRYNII, LAFAYMISIAFYLRLLSSFVFSG, VYERLLTTGLLLFIGISGFIRRL, AVGLKLSIIFSFLTALLYYNY, WISGFIYVSFMFLITSVFV, TEIIFLASAVSLVLGYLLRFGPL, GYLITTLVGVALVWSANVFEIIA, AFAFYYLLQTIIAWLVSF, and QFLVFTLLIPVLIFIVLF.

Its subcellular location is the cell membrane. This is an uncharacterized protein from Aquifex aeolicus (strain VF5).